Consider the following 673-residue polypeptide: Probable lysophospholipase 4 (673 aa).

A signal peptide spans 1–19 (MYVNYIGLFAFVQISLTLA). N-linked (GlcNAc...) asparagine glycans are attached at residues asparagine 72, asparagine 125, asparagine 191, asparagine 194, asparagine 272, asparagine 301, asparagine 374, asparagine 404, asparagine 409, asparagine 481, asparagine 516, asparagine 545, and asparagine 574. In terms of domain architecture, PLA2c spans 74–615 (TCSNDNLLRP…QEYCWDGTLA (542 aa)). Positions 631–653 (TTSRAPSGTTSGTASSTTSSSVA) are disordered.

It belongs to the lysophospholipase family.

Its subcellular location is the secreted. It catalyses the reaction a 1-acyl-sn-glycero-3-phosphocholine + H2O = sn-glycerol 3-phosphocholine + a fatty acid + H(+). Catalyzes the release of fatty acids from lysophospholipids. This Schizosaccharomyces pombe (strain 972 / ATCC 24843) (Fission yeast) protein is Probable lysophospholipase 4 (plb4).